A 238-amino-acid chain; its full sequence is Survival of motor neuron-related-splicing factor 30 (238 aa).

A Tudor domain is found at 72–132 (SWKVGDKCMA…KPVEEGRKAK (61 aa)). The Nuclear localization signal signature appears at 142–160 (KKEMIAQQREYKKKKALKK). Serine 201 carries the phosphoserine modification. Position 219 is an N6-acetyllysine (lysine 219).

It belongs to the SMN family. In terms of assembly, associates with spliceosomes. Associates with U4/U5/U6 tri-snRNP and with U2 snRNP.

It is found in the nucleus speckle. Its subcellular location is the nucleus. The protein resides in the cajal body. Its function is as follows. Involved in spliceosome assembly. This chain is Survival of motor neuron-related-splicing factor 30 (Smndc1), found in Rattus norvegicus (Rat).